The following is a 323-amino-acid chain: MSNLTLSQFLQQEKGNLTPELAQVIDTIAATCKTIDQALQKGALAGILGSAGNENVQGETQKKLDVISNDYLIDALKVHPHVGGLASEELDDFTPAQENGEYLVLFDPLDGSSNIDINMCVGTIFSILPAKNAVTQAQDFMQAGTQQVAAGYVLYGPSTMMALTVGNGVAFFTLDPETQTFLLTTENVQVSADTQEFAINASNQRHWEQPVKQYIEELLAGKTSVREKDFNMRWVACMVGDVHRILCRGGIFLYPYDLKDPKKAGRLRLMYEANPMSMLIEQAGGASTTGRVRILEIEPTELHQRVPVIIGSKNEVERVTSYH.

Mg(2+) contacts are provided by Glu-88, Asp-107, Leu-109, and Asp-110. Residues 110-113 (DGSS) and Asn-200 contribute to the substrate site. Residue Glu-272 participates in Mg(2+) binding.

The protein belongs to the FBPase class 1 family. Homotetramer. Mg(2+) is required as a cofactor.

Its subcellular location is the cytoplasm. It carries out the reaction beta-D-fructose 1,6-bisphosphate + H2O = beta-D-fructose 6-phosphate + phosphate. The protein operates within carbohydrate biosynthesis; gluconeogenesis. The sequence is that of Fructose-1,6-bisphosphatase class 1 from Acinetobacter baumannii (strain ACICU).